Reading from the N-terminus, the 216-residue chain is 2,5-diamino-6-ribosylamino-4(3H)-pyrimidinone 5'-phosphate reductase (216 aa).

NADP(+) is bound by residues threonine 51, aspartate 55, 79-82 (SMAR), valine 126, and 148-151 (GSTL).

Belongs to the HTP reductase family. As to quaternary structure, homodimer.

The enzyme catalyses 2,5-diamino-6-(1-D-ribitylamino)pyrimidin-4(3H)-one 5'-phosphate + NADP(+) = 2,5-diamino-6-(1-D-ribosylamino)pyrimidin-4(3H)-one 5'-phosphate + NADPH + H(+). It carries out the reaction 2,5-diamino-6-(1-D-ribitylamino)pyrimidin-4(3H)-one 5'-phosphate + NAD(+) = 2,5-diamino-6-(1-D-ribosylamino)pyrimidin-4(3H)-one 5'-phosphate + NADH + H(+). The protein operates within cofactor biosynthesis; riboflavin biosynthesis. Catalyzes an early step in riboflavin biosynthesis, the NADPH-dependent reduction of the ribose side chain of 2,5-diamino-6-ribosylamino-4(3H)-pyrimidinone 5'-phosphate, yielding 2,5-diamino-6-ribitylamino-4(3H)-pyrimidinone 5'-phosphate. The chain is 2,5-diamino-6-ribosylamino-4(3H)-pyrimidinone 5'-phosphate reductase from Methanothermobacter thermautotrophicus (strain ATCC 29096 / DSM 1053 / JCM 10044 / NBRC 100330 / Delta H) (Methanobacterium thermoautotrophicum).